Here is a 76-residue protein sequence, read N- to C-terminus: MDFKRVKEYFAWLYYQYQIITCCAVMEPWEQSMLNTIILTIVAMVVYTAYVFIPIHIRLAWEFFSKICGYDSSISN.

Residues 1-11 (MDFKRVKEYFA) are Cytoplasmic-facing. The helical transmembrane segment at 12-29 (WLYYQYQIITCCAVMEPW) threads the bilayer. Residues 30-36 (EQSMLNT) lie on the Lumenal side of the membrane. A helical membrane pass occupies residues 37–57 (IILTIVAMVVYTAYVFIPIHI). At 58 to 76 (RLAWEFFSKICGYDSSISN) the chain is on the cytoplasmic side.

It belongs to the SPTSS family. SPTSSB subfamily. In terms of assembly, component of the serine palmitoyltransferase (SPT) complex, which is composed of SPTLC1, SPTLC2 or SPTLC3 and SPTSSA or SPTSSB. The heterodimer consisting of SPTLC1 and SPTLC2/SPTLC3 forms the catalytic core of the enzyme, while SPTSSA or SPTSSB subunits determine substrate specificity. SPT also interacts with ORMDL proteins, especially ORMDL3, which negatively regulate SPT activity in the presence of ceramides. As to expression, expression is strong in hypogonadal (hpg) mouse prostate, weak in mature castrated mouse prostate and absent in normal intact or androgen-replaced hpg mouse prostates.

It is found in the endoplasmic reticulum membrane. Its pathway is lipid metabolism; sphingolipid metabolism. In terms of biological role, component of the serine palmitoyltransferase multisubunit enzyme (SPT) that catalyzes the initial and rate-limiting step in sphingolipid biosynthesis by condensing L-serine and activated acyl-CoA (most commonly palmitoyl-CoA) to form long-chain bases. The SPT complex is composed of SPTLC1, SPTLC2 or SPTLC3 and SPTSSA or SPTSSB. Within this complex, the heterodimer consisting of SPTLC1 and SPTLC2/SPTLC3 forms the catalytic core. Within the SPT complex, SPTSSB stimulates the catalytic activity and plays a role in substrate specificity. SPT complexes with this subunit showing a preference for longer acyl-CoAs. The SPTLC1-SPTLC2-SPTSSB complex shows a strong preference for C18-CoA substrate, while the SPTLC1-SPTLC3-SPTSSB isozyme displays an ability to use a broader range of acyl-CoAs, without apparent preference. The protein is Serine palmitoyltransferase small subunit B (Sptssb) of Mus musculus (Mouse).